We begin with the raw amino-acid sequence, 244 residues long: 5-oxoprolinase subunit A (244 aa).

This sequence belongs to the LamB/PxpA family. As to quaternary structure, forms a complex composed of PxpA, PxpB and PxpC.

The enzyme catalyses 5-oxo-L-proline + ATP + 2 H2O = L-glutamate + ADP + phosphate + H(+). In terms of biological role, catalyzes the cleavage of 5-oxoproline to form L-glutamate coupled to the hydrolysis of ATP to ADP and inorganic phosphate. The polypeptide is 5-oxoprolinase subunit A (Escherichia coli O6:K15:H31 (strain 536 / UPEC)).